We begin with the raw amino-acid sequence, 206 residues long: MSQPKILLLGAPGAGKGTQSSNIVDEYGVDHITTGDALRANKDMETEHGTPREFMEAGELVPDPVVNEIVQAAIDEADGFVLDGYPRNLSQAEYLSDITDVDVVALLDVGRDELVDRLTGRRMDPETGDIYHTEFNMPDDEEVRERLVQRDDDTEETVNERLDVFDENTQPVIDYYEDEGELVRIDGEASPDEVWDDLQAAIDDAL.

Positions 1 to 21 (MSQPKILLLGAPGAGKGTQSS) are disordered. Position 13 to 18 (13 to 18 (GAGKGT)) interacts with ATP. Residues 33–61 (TTGDALRANKDMETEHGTPREFMEAGELV) form an NMP region. Residues T34, R39, 59–61 (ELV), 84–87 (GYPR), and Q91 contribute to the AMP site. The interval 120–153 (GRRMDPETGDIYHTEFNMPDDEEVRERLVQRDDD) is LID. Residues R121 and 130–131 (IY) each bind ATP. Residues R150 and R161 each contribute to the AMP site. A189 provides a ligand contact to ATP.

The protein belongs to the adenylate kinase family. As to quaternary structure, monomer.

It localises to the cytoplasm. It carries out the reaction AMP + ATP = 2 ADP. The protein operates within purine metabolism; AMP biosynthesis via salvage pathway; AMP from ADP: step 1/1. Catalyzes the reversible transfer of the terminal phosphate group between ATP and AMP. Plays an important role in cellular energy homeostasis and in adenine nucleotide metabolism. The protein is Adenylate kinase of Natronomonas pharaonis (strain ATCC 35678 / DSM 2160 / CIP 103997 / JCM 8858 / NBRC 14720 / NCIMB 2260 / Gabara) (Halobacterium pharaonis).